Here is a 68-residue protein sequence, read N- to C-terminus: Protein SrnB (68 aa).

Residues 23–42 traverse the membrane as a helical segment; the sequence is YALIGLLAVCATVLCFSLIF.

It belongs to the Hok/Gef family.

The protein localises to the cell inner membrane. Toxic component of a type I toxin-antitoxin (TA) system. Its normal function is believed to be effective plasmid stabilization through postsegregational killing of cells that have lost the F plasmid. Promotes degradation of stable RNA in E.coli. The protein is Protein SrnB (srnB) of Escherichia coli (strain K12).